The sequence spans 329 residues: DNA-directed RNA polymerase subunit alpha (329 aa).

The tract at residues 1 to 235 is alpha N-terminal domain (alpha-NTD); that stretch reads MQGSVTEFLK…EQLDAFVDLR (235 aa). The tract at residues 249 to 329 is alpha C-terminal domain (alpha-CTD); that stretch reads FDPILLRPVD…NWPPASIAED (81 aa).

Belongs to the RNA polymerase alpha chain family. As to quaternary structure, homodimer. The RNAP catalytic core consists of 2 alpha, 1 beta, 1 beta' and 1 omega subunit. When a sigma factor is associated with the core the holoenzyme is formed, which can initiate transcription.

The catalysed reaction is RNA(n) + a ribonucleoside 5'-triphosphate = RNA(n+1) + diphosphate. In terms of biological role, DNA-dependent RNA polymerase catalyzes the transcription of DNA into RNA using the four ribonucleoside triphosphates as substrates. The sequence is that of DNA-directed RNA polymerase subunit alpha from Histophilus somni (strain 129Pt) (Haemophilus somnus).